Reading from the N-terminus, the 152-residue chain is Endoribonuclease YbeY (152 aa).

His118, His122, and His128 together coordinate Zn(2+).

It belongs to the endoribonuclease YbeY family. It depends on Zn(2+) as a cofactor.

It localises to the cytoplasm. In terms of biological role, single strand-specific metallo-endoribonuclease involved in late-stage 70S ribosome quality control and in maturation of the 3' terminus of the 16S rRNA. In Lacticaseibacillus casei (strain BL23) (Lactobacillus casei), this protein is Endoribonuclease YbeY.